We begin with the raw amino-acid sequence, 249 residues long: Putative TrmH family tRNA/rRNA methyltransferase YacO (249 aa).

Positions 198, 218, and 227 each coordinate S-adenosyl-L-methionine.

It belongs to the class IV-like SAM-binding methyltransferase superfamily. RNA methyltransferase TrmH family.

This Bacillus subtilis (strain 168) protein is Putative TrmH family tRNA/rRNA methyltransferase YacO (yacO).